A 421-amino-acid polypeptide reads, in one-letter code: Zinc finger protein 57 (421 aa).

In terms of domain architecture, KRAB spans 15 to 88; that stretch reads VSYEDVAVSF…SCTGVFKGGP (74 aa). The segment at 90–113 adopts a C2H2-type 1; degenerate zinc-finger fold; that stretch reads FFCLTCGKCFKKNTFLFNHQFPVR. 2 C2H2-type zinc fingers span residues 140-162 and 168-190; these read FFCN…RRAH and RSCP…LKVH. The tract at residues 191-221 is disordered; it reads QNKPAASNQAGNQASNQRLKSRVPPTTPRSQ. Low complexity predominate over residues 195 to 207; that stretch reads AASNQAGNQASNQ. The C2H2-type 4 zinc-finger motif lies at 264-286; that stretch reads ISCPYCHITFTMRTCLLTHLKIH. Residues 313-332 form a C2H2-type 5; degenerate zinc finger; that stretch reads YTCPVCDSSFRGKESLLDHL. The disordered stretch occupies residues 371-421; that stretch reads GKRMESRRRRRKRACTENPETEGLSGKGRVAPWEMEGATSPESPVTEEDSD.

This sequence belongs to the krueppel C2H2-type zinc-finger protein family. Expressed in oocytes and in a subset of adult tissues. Expressed at high levels in testis, and at low levels in cerebellum. Present in sciatic nerve and spinal cord (at protein level).

It localises to the nucleus. Its function is as follows. Transcription regulator required to maintain maternal and paternal gene imprinting, a process by which gene expression is restricted in a parent of origin-specific manner by epigenetic modification of genomic DNA and chromatin, including DNA methylation. Acts by controlling DNA methylation during the earliest multicellular stages of development at multiple imprinting control regions (ICRs). Acts together with ZNF445, but ZFP57 plays the predominant role in imprinting maintenance. In contrast, in humans, ZNF445 seems to be the major factor early embryonic imprinting maintenance. Required for the establishment of maternal methylation imprints at SNRPN locus. Acts as a transcriptional repressor in Schwann cells. Binds to a 5'-TGCCGC-3' consensus sequence and recognizes the methylated CpG within this element. This chain is Zinc finger protein 57 (Zfp57), found in Mus musculus (Mouse).